The following is a 283-amino-acid chain: Small ribosomal subunit protein uS2B (283 aa).

Positions 254–283 (GQVGQSAWDEEGDWNTTGAAQTSDWANTVA) are disordered. The span at 267–283 (WNTTGAAQTSDWANTVA) shows a compositional bias: polar residues.

The protein belongs to the universal ribosomal protein uS2 family. Component of the small ribosomal subunit. Mature ribosomes consist of a small (40S) and a large (60S) subunit. The 40S subunit contains about 33 different proteins and 1 molecule of RNA (18S). The 60S subunit contains about 49 different proteins and 3 molecules of RNA (25S, 5.8S and 5S). Interacts with rps21.

The protein resides in the cytoplasm. Functionally, required for the assembly and/or stability of the 40S ribosomal subunit. Required for the processing of the 20S rRNA-precursor to mature 18S rRNA in a late step of the maturation of 40S ribosomal subunits. In Schizosaccharomyces japonicus (strain yFS275 / FY16936) (Fission yeast), this protein is Small ribosomal subunit protein uS2B (rps0b).